A 282-amino-acid chain; its full sequence is Sulfur carrier protein FdhD (282 aa).

The active-site Cysteine persulfide intermediate is Cys-126. 265 to 270 provides a ligand contact to Mo-bis(molybdopterin guanine dinucleotide); the sequence is FVRNNR.

Belongs to the FdhD family.

The protein resides in the cytoplasm. Required for formate dehydrogenase (FDH) activity. Acts as a sulfur carrier protein that transfers sulfur from IscS to the molybdenum cofactor prior to its insertion into FDH. The polypeptide is Sulfur carrier protein FdhD (Thermoplasma acidophilum (strain ATCC 25905 / DSM 1728 / JCM 9062 / NBRC 15155 / AMRC-C165)).